A 336-amino-acid polypeptide reads, in one-letter code: Holliday junction branch migration complex subunit RuvB (336 aa).

The large ATPase domain (RuvB-L) stretch occupies residues 1–182; sequence MKERIVNLET…FGMSFRMQFY (182 aa). Residues L21, R22, G63, K66, T67, S68, 129-131, R172, Y182, and R219 contribute to the ATP site; that span reads EDF. A Mg(2+)-binding site is contributed by T67. Residues 183 to 253 form a small ATPAse domain (RuvB-S) region; the sequence is SPSELSLIIK…ITLHALNELG (71 aa). Residues 256 to 336 form a head domain (RuvB-H) region; that stretch reads ELGFDEADLA…IPTLNPQTLF (81 aa). Residues R310 and R315 each coordinate DNA.

This sequence belongs to the RuvB family. As to quaternary structure, homohexamer. Forms an RuvA(8)-RuvB(12)-Holliday junction (HJ) complex. HJ DNA is sandwiched between 2 RuvA tetramers; dsDNA enters through RuvA and exits via RuvB. An RuvB hexamer assembles on each DNA strand where it exits the tetramer. Each RuvB hexamer is contacted by two RuvA subunits (via domain III) on 2 adjacent RuvB subunits; this complex drives branch migration. In the full resolvosome a probable DNA-RuvA(4)-RuvB(12)-RuvC(2) complex forms which resolves the HJ.

Its subcellular location is the cytoplasm. The enzyme catalyses ATP + H2O = ADP + phosphate + H(+). Its function is as follows. The RuvA-RuvB-RuvC complex processes Holliday junction (HJ) DNA during genetic recombination and DNA repair, while the RuvA-RuvB complex plays an important role in the rescue of blocked DNA replication forks via replication fork reversal (RFR). RuvA specifically binds to HJ cruciform DNA, conferring on it an open structure. The RuvB hexamer acts as an ATP-dependent pump, pulling dsDNA into and through the RuvAB complex. RuvB forms 2 homohexamers on either side of HJ DNA bound by 1 or 2 RuvA tetramers; 4 subunits per hexamer contact DNA at a time. Coordinated motions by a converter formed by DNA-disengaged RuvB subunits stimulates ATP hydrolysis and nucleotide exchange. Immobilization of the converter enables RuvB to convert the ATP-contained energy into a lever motion, pulling 2 nucleotides of DNA out of the RuvA tetramer per ATP hydrolyzed, thus driving DNA branch migration. The RuvB motors rotate together with the DNA substrate, which together with the progressing nucleotide cycle form the mechanistic basis for DNA recombination by continuous HJ branch migration. Branch migration allows RuvC to scan DNA until it finds its consensus sequence, where it cleaves and resolves cruciform DNA. The chain is Holliday junction branch migration complex subunit RuvB from Helicobacter pylori (strain P12).